Consider the following 580-residue polypeptide: Putative Xaa-Pro dipeptidyl-peptidase (580 aa).

Active-site charge relay system residues include Ser207, Asp319, and His350.

It belongs to the peptidase S15 family.

The catalysed reaction is Hydrolyzes Xaa-Pro-|- bonds to release unblocked, N-terminal dipeptides from substrates including Ala-Pro-|-p-nitroanilide and (sequentially) Tyr-Pro-|-Phe-Pro-|-Gly-Pro-|-Ile.. The chain is Putative Xaa-Pro dipeptidyl-peptidase from Bacillus cereus (strain ATCC 14579 / DSM 31 / CCUG 7414 / JCM 2152 / NBRC 15305 / NCIMB 9373 / NCTC 2599 / NRRL B-3711).